The chain runs to 827 residues: Glycerol-3-phosphate acyltransferase (827 aa).

The short motif at 325–330 (CHRSHM) is the HXXXXD motif element.

This sequence belongs to the GPAT/DAPAT family.

It localises to the cell inner membrane. The catalysed reaction is sn-glycerol 3-phosphate + an acyl-CoA = a 1-acyl-sn-glycero-3-phosphate + CoA. It functions in the pathway phospholipid metabolism; CDP-diacylglycerol biosynthesis; CDP-diacylglycerol from sn-glycerol 3-phosphate: step 1/3. The protein is Glycerol-3-phosphate acyltransferase of Shigella boydii serotype 4 (strain Sb227).